Consider the following 122-residue polypeptide: ATP-dependent Clp protease adapter protein ClpS (122 aa).

The segment at M1–S27 is disordered. The span at S10–A19 shows a compositional bias: pro residues.

Belongs to the ClpS family. As to quaternary structure, binds to the N-terminal domain of the chaperone ClpA.

Functionally, involved in the modulation of the specificity of the ClpAP-mediated ATP-dependent protein degradation. In Paracidovorax citrulli (strain AAC00-1) (Acidovorax citrulli), this protein is ATP-dependent Clp protease adapter protein ClpS.